A 300-amino-acid polypeptide reads, in one-letter code: uncharacterized protein (300 aa).

Residues 1 to 7 lie on the Periplasmic side of the membrane; sequence MGSTRKG. Residues 8–28 traverse the membrane as a helical segment; it reads MLNVLIAAVLWGSSGVCAQYI. An EamA 1 domain is found at 16–145; sequence VLWGSSGVCA…SLIGTFLLVT (130 aa). The Cytoplasmic segment spans residues 29-45; it reads MEQSRMSSQFLTMIRLL. Residues 46 to 66 traverse the membrane as a helical segment; it reads FAGLILVTFSFMHGDKIFSIL. Over 67 to 71 the chain is Periplasmic; the sequence is KNRKD. Residues 72–92 form a helical membrane-spanning segment; the sequence is ALSLLIFSVVGALTVQLTFLL. Topologically, residues 93–99 are cytoplasmic; sequence TIEKSNA. A helical membrane pass occupies residues 100 to 120; the sequence is ATATVLQFLSPTIIVAWFALA. Residues 121 to 124 lie on the Periplasmic side of the membrane; the sequence is RRTR. A helical membrane pass occupies residues 125–145; the sequence is PGILVLTAILTSLIGTFLLVT. Residues 146–151 are Cytoplasmic-facing; that stretch reads HGNPTS. Residues 152–172 traverse the membrane as a helical segment; that stretch reads LSISSAALFWGIASAFAAAFY. One can recognise an EamA 2 domain in the interval 167–291; that stretch reads FAAAFYTTWP…ILSSVILISL (125 aa). Residues 173-184 are Periplasmic-facing; that stretch reads TTWPSRLIAQYG. A helical membrane pass occupies residues 185-205; the sequence is TLPVVGWSMSFGGLILLPFYA. The Cytoplasmic segment spans residues 206-216; the sequence is KEGTHFAVSGS. A helical transmembrane segment spans residues 217–237; it reads LILAFFYLVVIGTSLTFSLYL. The Periplasmic portion of the chain corresponds to 238 to 263; the sequence is KGAQLIGGPKASILSCAEPLSSALLS. The chain crosses the membrane as a helical span at residues 264 to 284; sequence LLLLGISFTLPDWLGTLLILS. Topologically, residues 285–300 are cytoplasmic; sequence SVILISLDSRRRARAA.

This sequence belongs to the EamA transporter family.

The protein resides in the cell inner membrane. This is an uncharacterized protein from Salmonella typhimurium (strain LT2 / SGSC1412 / ATCC 700720).